Consider the following 342-residue polypeptide: Nicotinate-nucleotide--dimethylbenzimidazole phosphoribosyltransferase (342 aa).

The Proton acceptor role is filled by Glu-311.

It belongs to the CobT family.

It carries out the reaction 5,6-dimethylbenzimidazole + nicotinate beta-D-ribonucleotide = alpha-ribazole 5'-phosphate + nicotinate + H(+). The protein operates within nucleoside biosynthesis; alpha-ribazole biosynthesis; alpha-ribazole from 5,6-dimethylbenzimidazole: step 1/2. Catalyzes the synthesis of alpha-ribazole-5'-phosphate from nicotinate mononucleotide (NAMN) and 5,6-dimethylbenzimidazole (DMB). The sequence is that of Nicotinate-nucleotide--dimethylbenzimidazole phosphoribosyltransferase from Photobacterium profundum (strain SS9).